The primary structure comprises 714 residues: Polyribonucleotide nucleotidyltransferase (714 aa).

Residues Asp-493 and Asp-499 each coordinate Mg(2+). A KH domain is found at 559 to 618 (PRIETTKIPADRIGELIGPGGKNIKAIQAESGADINIEEDGTVHIYAAKQEGLDRALELV). Positions 628–696 (GELYTGKIVS…DKGRVKMSIR (69 aa)) constitute an S1 motif domain.

This sequence belongs to the polyribonucleotide nucleotidyltransferase family. It depends on Mg(2+) as a cofactor.

The protein localises to the cytoplasm. The catalysed reaction is RNA(n+1) + phosphate = RNA(n) + a ribonucleoside 5'-diphosphate. Involved in mRNA degradation. Catalyzes the phosphorolysis of single-stranded polyribonucleotides processively in the 3'- to 5'-direction. This chain is Polyribonucleotide nucleotidyltransferase, found in Akkermansia muciniphila (strain ATCC BAA-835 / DSM 22959 / JCM 33894 / BCRC 81048 / CCUG 64013 / CIP 107961 / Muc).